The primary structure comprises 600 residues: Elongation factor 4 (600 aa).

The region spanning 3-185 (KYIRNFSIIA…CLIHDIPHPQ (183 aa)) is the tr-type G domain. Residues 15-20 (DHGKST) and 132-135 (NKID) contribute to the GTP site.

The protein belongs to the TRAFAC class translation factor GTPase superfamily. Classic translation factor GTPase family. LepA subfamily.

The protein localises to the cell inner membrane. The enzyme catalyses GTP + H2O = GDP + phosphate + H(+). Functionally, required for accurate and efficient protein synthesis under certain stress conditions. May act as a fidelity factor of the translation reaction, by catalyzing a one-codon backward translocation of tRNAs on improperly translocated ribosomes. Back-translocation proceeds from a post-translocation (POST) complex to a pre-translocation (PRE) complex, thus giving elongation factor G a second chance to translocate the tRNAs correctly. Binds to ribosomes in a GTP-dependent manner. This chain is Elongation factor 4, found in Blochmanniella pennsylvanica (strain BPEN).